A 67-amino-acid polypeptide reads, in one-letter code: Phycobilisome 7.8 kDa linker polypeptide, allophycocyanin-associated, core (67 aa).

Positions 1–56 (GRLFKITACVPSQTRIRTQRELQNTYFTKLVPYENWFREQQRIQKMGGKIVKVELA) constitute a CpcD-like domain.

The protein belongs to the phycobilisome linker protein family.

The protein localises to the cellular thylakoid membrane. Functionally, rod linker protein, associated with allophycocyanin. Linker polypeptides determine the state of aggregation and the location of the disk-shaped phycobiliprotein units within the phycobilisome and modulate their spectroscopic properties in order to mediate a directed and optimal energy transfer. The chain is Phycobilisome 7.8 kDa linker polypeptide, allophycocyanin-associated, core (apcC) from Mastigocladus laminosus (Fischerella sp.).